The sequence spans 466 residues: Major capsid protein (466 aa).

This sequence belongs to the NCLDV major capsid protein family. In terms of assembly, homotrimer.

Its subcellular location is the virion. In terms of biological role, major capsid protein that self assembles to form an icosahedral capsid. Represents around 50% of the total virion protein mass. In Invertebrate iridescent virus 3 (IIV-3), this protein is Major capsid protein (MCP).